Here is a 257-residue protein sequence, read N- to C-terminus: tRNA (guanine-N(1)-)-methyltransferase (257 aa).

S-adenosyl-L-methionine-binding positions include Gly112 and 136 to 141; that span reads LGDYVL.

Belongs to the RNA methyltransferase TrmD family. In terms of assembly, homodimer.

The protein localises to the cytoplasm. The enzyme catalyses guanosine(37) in tRNA + S-adenosyl-L-methionine = N(1)-methylguanosine(37) in tRNA + S-adenosyl-L-homocysteine + H(+). Its function is as follows. Specifically methylates guanosine-37 in various tRNAs. This chain is tRNA (guanine-N(1)-)-methyltransferase, found in Salinispora arenicola (strain CNS-205).